The sequence spans 991 residues: Integrator complex subunit 10-like protein (991 aa).

5 disordered regions span residues 180–217 (NNNNNNNNNNNNNNNNKNNSNNNNKNNNNNNDDSNNNN), 310–345 (YFDEDDYDQKQQQQQQQQQQQQEQKGSKEDEEDIEK), 462–484 (NDYFDRNSEGNGGDENDENSQES), 549–614 (NSSS…GQQP), and 961–991 (EKQYSSSNTANNSGVNNSPIHNQNTDVEMNE). Over residues 319-333 (KQQQQQQQQQQQQEQ) the composition is skewed to low complexity. Residues 473-484 (GGDENDENSQES) are compositionally biased toward acidic residues. Low complexity predominate over residues 549–609 (NSSSGSNGII…NNNNNNNNNN (61 aa)). The span at 964 to 991 (YSSSNTANNSGVNNSPIHNQNTDVEMNE) shows a compositional bias: polar residues.

The protein localises to the nucleus. In terms of biological role, may be a component of the Integrator complex, a complex involved in the small nuclear RNAs (snRNA) U1 and U2 transcription and in their 3'-box-dependent processing. The sequence is that of Integrator complex subunit 10-like protein from Dictyostelium discoideum (Social amoeba).